A 388-amino-acid polypeptide reads, in one-letter code: Succinate--CoA ligase [ADP-forming] subunit beta (388 aa).

An ATP-grasp domain is found at 9 to 244 (KQLFARYGMP…LSQEDERESR (236 aa)). ATP contacts are provided by residues lysine 46, 53–55 (GRG), glutamate 99, threonine 102, and glutamate 107. Mg(2+) is bound by residues asparagine 199 and aspartate 213. Substrate-binding positions include asparagine 264 and 321 to 323 (GIV).

This sequence belongs to the succinate/malate CoA ligase beta subunit family. As to quaternary structure, heterotetramer of two alpha and two beta subunits. Mg(2+) is required as a cofactor.

It catalyses the reaction succinate + ATP + CoA = succinyl-CoA + ADP + phosphate. The catalysed reaction is GTP + succinate + CoA = succinyl-CoA + GDP + phosphate. It functions in the pathway carbohydrate metabolism; tricarboxylic acid cycle; succinate from succinyl-CoA (ligase route): step 1/1. In terms of biological role, succinyl-CoA synthetase functions in the citric acid cycle (TCA), coupling the hydrolysis of succinyl-CoA to the synthesis of either ATP or GTP and thus represents the only step of substrate-level phosphorylation in the TCA. The beta subunit provides nucleotide specificity of the enzyme and binds the substrate succinate, while the binding sites for coenzyme A and phosphate are found in the alpha subunit. This Serratia proteamaculans (strain 568) protein is Succinate--CoA ligase [ADP-forming] subunit beta.